Here is a 494-residue protein sequence, read N- to C-terminus: Probable capsid protein (494 aa).

The Nuclear localization signal signature appears at 120-123 (RPKR). Residues 418–435 (CRCWVCNIEGHYANECPN) form a CCHC-type zinc finger. The interval 474 to 494 (LSSSDSELDDTCEESSSEESE) is disordered. The segment covering 479-494 (SELDDTCEESSSEESE) has biased composition (acidic residues).

The protein belongs to the caulimoviridae capsid protein family. Interacts (via nuclear localization signal) with host importin alpha.

It is found in the virion. The protein resides in the host nucleus. In terms of biological role, self assembles to form an icosahedral capsid, about 50 nm in diameter, nm, composed of 420 subunits of the viral capsid protein. The capsid encapsulates the genomic dsDNA. Following virus entry into host cell, provides nuclear import of the viral genome. Virus particles do not enter the nucleus, but dock at the nuclear membrane through the interaction with host importins. This is Probable capsid protein from Dianthus caryophyllus (Carnation).